We begin with the raw amino-acid sequence, 378 residues long: Queuine tRNA-ribosyltransferase (378 aa).

The active-site Proton acceptor is aspartate 90. Residues 90–94 (DSGGF), aspartate 144, glutamine 188, and glycine 220 contribute to the substrate site. Positions 251-257 (GVGTPED) are RNA binding. Catalysis depends on aspartate 270, which acts as the Nucleophile. The RNA binding; important for wobble base 34 recognition stretch occupies residues 275 to 279 (TRNAR). Positions 308, 310, 313, and 339 each coordinate Zn(2+).

Belongs to the queuine tRNA-ribosyltransferase family. Homodimer. Within each dimer, one monomer is responsible for RNA recognition and catalysis, while the other monomer binds to the replacement base PreQ1. It depends on Zn(2+) as a cofactor.

It catalyses the reaction 7-aminomethyl-7-carbaguanine + guanosine(34) in tRNA = 7-aminomethyl-7-carbaguanosine(34) in tRNA + guanine. It functions in the pathway tRNA modification; tRNA-queuosine biosynthesis. In terms of biological role, catalyzes the base-exchange of a guanine (G) residue with the queuine precursor 7-aminomethyl-7-deazaguanine (PreQ1) at position 34 (anticodon wobble position) in tRNAs with GU(N) anticodons (tRNA-Asp, -Asn, -His and -Tyr). Catalysis occurs through a double-displacement mechanism. The nucleophile active site attacks the C1' of nucleotide 34 to detach the guanine base from the RNA, forming a covalent enzyme-RNA intermediate. The proton acceptor active site deprotonates the incoming PreQ1, allowing a nucleophilic attack on the C1' of the ribose to form the product. After dissociation, two additional enzymatic reactions on the tRNA convert PreQ1 to queuine (Q), resulting in the hypermodified nucleoside queuosine (7-(((4,5-cis-dihydroxy-2-cyclopenten-1-yl)amino)methyl)-7-deazaguanosine). The sequence is that of Queuine tRNA-ribosyltransferase from Nautilia profundicola (strain ATCC BAA-1463 / DSM 18972 / AmH).